The sequence spans 236 residues: Phosphoribosylaminoimidazole-succinocarboxamide synthase (236 aa).

The protein belongs to the SAICAR synthetase family.

It catalyses the reaction 5-amino-1-(5-phospho-D-ribosyl)imidazole-4-carboxylate + L-aspartate + ATP = (2S)-2-[5-amino-1-(5-phospho-beta-D-ribosyl)imidazole-4-carboxamido]succinate + ADP + phosphate + 2 H(+). The protein operates within purine metabolism; IMP biosynthesis via de novo pathway; 5-amino-1-(5-phospho-D-ribosyl)imidazole-4-carboxamide from 5-amino-1-(5-phospho-D-ribosyl)imidazole-4-carboxylate: step 1/2. The polypeptide is Phosphoribosylaminoimidazole-succinocarboxamide synthase (Campylobacter jejuni subsp. jejuni serotype O:6 (strain 81116 / NCTC 11828)).